The sequence spans 337 residues: Vacuolar protein sorting-associated protein 26B (337 aa).

The tract at residues 311–337 (SQRFEGTSHPETRPQHSGAAAVEQEQE) is disordered.

It belongs to the VPS26 family. Component of the heterotrimeric retromer cargo-selective complex (CSC) which is believed to associate with variable sorting nexins to form functionally distinct retromer complex variants.

It is found in the cytoplasm. Its subcellular location is the membrane. The protein resides in the endosome. In terms of biological role, acts as a component of the retromer cargo-selective complex (CSC). The CSC is believed to be the core functional component of retromer or respective retromer complex variants acting to prevent missorting of selected transmembrane cargo proteins into the lysosomal degradation pathway. Retromer mediates retrograde transport of cargo proteins from endosomes to the trans-Golgi network (TGN). The sequence is that of Vacuolar protein sorting-associated protein 26B (vps26b) from Xenopus tropicalis (Western clawed frog).